The primary structure comprises 368 residues: Acetyl-coenzyme A carboxylase carboxyl transferase subunit alpha (368 aa).

Residues 44–294 form the CoA carboxyltransferase C-terminal domain; that stretch reads EIDNKLQEIY…RKSIEKNLNE (251 aa).

It belongs to the AccA family. As to quaternary structure, acetyl-CoA carboxylase is a heterohexamer composed of biotin carboxyl carrier protein (AccB), biotin carboxylase (AccC) and two subunits each of ACCase subunit alpha (AccA) and ACCase subunit beta (AccD).

The protein localises to the cytoplasm. The enzyme catalyses N(6)-carboxybiotinyl-L-lysyl-[protein] + acetyl-CoA = N(6)-biotinyl-L-lysyl-[protein] + malonyl-CoA. Its pathway is lipid metabolism; malonyl-CoA biosynthesis; malonyl-CoA from acetyl-CoA: step 1/1. In terms of biological role, component of the acetyl coenzyme A carboxylase (ACC) complex. First, biotin carboxylase catalyzes the carboxylation of biotin on its carrier protein (BCCP) and then the CO(2) group is transferred by the carboxyltransferase to acetyl-CoA to form malonyl-CoA. This is Acetyl-coenzyme A carboxylase carboxyl transferase subunit alpha from Pelagibacter ubique (strain HTCC1062).